Consider the following 252-residue polypeptide: Chitooligosaccharide deacetylase (252 aa).

Mg(2+) contacts are provided by His-61 and His-125.

The protein belongs to the YdjC deacetylase family. ChbG subfamily. As to quaternary structure, homodimer. The cofactor is Mg(2+).

It is found in the cytoplasm. The enzyme catalyses N,N'-diacetylchitobiose + H2O = N-acetyl-beta-D-glucosaminyl-(1-&gt;4)-D-glucosamine + acetate. It catalyses the reaction diacetylchitobiose-6'-phosphate + H2O = N'-monoacetylchitobiose-6'-phosphate + acetate. Its pathway is glycan degradation; chitin degradation. Involved in the degradation of chitin. ChbG is essential for growth on the acetylated chitooligosaccharides chitobiose and chitotriose but is dispensable for growth on cellobiose and chitosan dimer, the deacetylated form of chitobiose. Deacetylation of chitobiose-6-P and chitotriose-6-P is necessary for both the activation of the chb promoter by the regulatory protein ChbR and the hydrolysis of phosphorylated beta-glucosides by the phospho-beta-glucosidase ChbF. Catalyzes the removal of only one acetyl group from chitobiose-6-P to yield monoacetylchitobiose-6-P, the inducer of ChbR and the substrate of ChbF. This is Chitooligosaccharide deacetylase from Salmonella paratyphi B (strain ATCC BAA-1250 / SPB7).